The following is a 306-amino-acid chain: Protein FdhE homolog (306 aa).

The protein belongs to the FdhE family.

The protein resides in the cytoplasm. Its function is as follows. Necessary for formate dehydrogenase activity. In Proteus mirabilis (strain HI4320), this protein is Protein FdhE homolog.